The following is a 518-amino-acid chain: Nuclear receptor ROR-gamma (518 aa).

A modulating region spans residues 1–30 (MDRAPQRQHRASRELLAAKKTHTSQIEVIP). 2 consecutive NR C4-type zinc fingers follow at residues 31-51 (CKIC…CEGC) and 67-91 (CTRQ…LQKC). A DNA-binding region (nuclear receptor) is located at residues 31 to 96 (CKICGDKSSG…RLQKCLALGM (66 aa)). Disordered stretches follow at residues 105–183 (RMSK…SGSG) and 238–258 (HPGL…SFRS). The span at 109–118 (KQRDSLHAEV) shows a compositional bias: basic and acidic residues. Residues 119 to 130 (QKQLQQRQQQQQ) show a composition bias toward low complexity. The NR LBD domain occupies 269 to 508 (EIEHLVQSVC…PPLYKELFST (240 aa)). An AF-2 motif is present at residues 501–506 (LYKELF).

Belongs to the nuclear hormone receptor family. NR1 subfamily. In terms of assembly, interacts (via AF-2 motif) with the coactivator NCOA2 (via LXXLL motif). Interacts with the corepressor NCOR1. Interacts with CRY1. Interacts (via AF-2 motif) with the coactivators NCOA1 and PPARGC1A (via LXXLL motif). Interacts (via AF-2 motif) with PROX1. Interacts with FOXP3. Interacts with NR0B2. In terms of tissue distribution, isoform 1 is widely expressed in many tissues, including liver and adipose, and highly expressed in skeletal muscle. Isoform 2 is primarily expressed in immature thymocytes.

The protein resides in the nucleus. Its function is as follows. Nuclear receptor that binds DNA as a monomer to ROR response elements (RORE) containing a single core motif half-site 5'-AGGTCA-3' preceded by a short A-T-rich sequence. Key regulator of cellular differentiation, immunity, peripheral circadian rhythm as well as lipid, steroid, xenobiotics and glucose metabolism. Considered to have intrinsic transcriptional activity, have some natural ligands like oxysterols that act as agonists (25-hydroxycholesterol) or inverse agonists (7-oxygenated sterols), enhancing or repressing the transcriptional activity, respectively. Recruits distinct combinations of cofactors to target gene regulatory regions to modulate their transcriptional expression, depending on the tissue, time and promoter contexts. Regulates the circadian expression of clock genes such as CRY1, BMAL1 and NR1D1 in peripheral tissues and in a tissue-selective manner. Competes with NR1D1 for binding to their shared DNA response element on some clock genes such as BMAL1, CRY1 and NR1D1 itself, resulting in NR1D1-mediated repression or RORC-mediated activation of the expression, leading to the circadian pattern of clock genes expression. Therefore influences the period length and stability of the clock. Involved in the regulation of the rhythmic expression of genes involved in glucose and lipid metabolism, including PLIN2 and AVPR1A. Negative regulator of adipocyte differentiation through the regulation of early phase genes expression, such as MMP3. Controls adipogenesis as well as adipocyte size and modulates insulin sensitivity in obesity. In liver, has specific and redundant functions with RORA as positive or negative modulator of expression of genes encoding phase I and Phase II proteins involved in the metabolism of lipids, steroids and xenobiotics, such as SULT1E1. Also plays a role in the regulation of hepatocyte glucose metabolism through the regulation of G6PC1 and PCK1. Regulates the rhythmic expression of PROX1 and promotes its nuclear localization. Plays an indispensable role in the induction of IFN-gamma dependent anti-mycobacterial systemic immunity. In terms of biological role, essential for thymopoiesis and the development of several secondary lymphoid tissues, including lymph nodes and Peyer's patches. Required for the generation of LTi (lymphoid tissue inducer) cells. Regulates thymocyte survival through DNA-binding on ROREs of target gene promoter regions and recruitment of coactivaros via the AF-2. Also plays a key role, downstream of IL6 and TGFB and synergistically with RORA, for lineage specification of uncommitted CD4(+) T-helper (T(H)) cells into T(H)17 cells, antagonizing the T(H)1 program. Probably regulates IL17 and IL17F expression on T(H) by binding to the essential enhancer conserved non-coding sequence 2 (CNS2) in the IL17-IL17F locus. May also play a role in the pre-TCR activation cascade leading to the maturation of alpha/beta T-cells and may participate in the regulation of DNA accessibility in the TCR-J(alpha) locus. The chain is Nuclear receptor ROR-gamma (RORC) from Homo sapiens (Human).